Consider the following 314-residue polypeptide: MFKRTVILLAGPTGSGKTAVSLKLAPLVDGEIISVDSMQVYQGMDIGTAKVSLAIRQAVPHHLIDICHVQETFNAVDFYYHAIQACQDILSRNKVPILVGGTGFYFHTFLSGPPSGPSPDFALREQLSLEAQERGIGALYQELVELDSAYAATITKHDKNKIIRALEIIRKTGNKVSSYSWESTVNESKEYHCRGWLLSPDPELLRHNILERCDQMLEEGLVDEVRSLVALGIKGNTSASRAIGYREWIEFLDAGSPVERFEDTKQKFITNTWRYTKKQRTWFKRYPLFRELSPMGMTLGDIARKIAQDYFLCG.

11–18 (GPTGSGKT) is a binding site for ATP. 13 to 18 (TGSGKT) is a substrate binding site. Residues 36 to 39 (DSMQ) form an interaction with substrate tRNA region.

Belongs to the IPP transferase family. As to quaternary structure, monomer. Mg(2+) serves as cofactor.

The enzyme catalyses adenosine(37) in tRNA + dimethylallyl diphosphate = N(6)-dimethylallyladenosine(37) in tRNA + diphosphate. Its function is as follows. Catalyzes the transfer of a dimethylallyl group onto the adenine at position 37 in tRNAs that read codons beginning with uridine, leading to the formation of N6-(dimethylallyl)adenosine (i(6)A). The chain is tRNA dimethylallyltransferase from Chlamydia muridarum (strain MoPn / Nigg).